We begin with the raw amino-acid sequence, 395 residues long: Elongation factor Tu (395 aa).

Residues K10–Q204 enclose the tr-type G domain. The G1 stretch occupies residues G19–T26. G19–T26 is a GTP binding site. T26 contacts Mg(2+). Residues G60–N64 form a G2 region. A G3 region spans residues D81 to G84. GTP is bound by residues D81 to H85 and N136 to D139. The interval N136–D139 is G4. The tract at residues S174 to L176 is G5.

It belongs to the TRAFAC class translation factor GTPase superfamily. Classic translation factor GTPase family. EF-Tu/EF-1A subfamily. Monomer.

The protein resides in the cytoplasm. It carries out the reaction GTP + H2O = GDP + phosphate + H(+). In terms of biological role, GTP hydrolase that promotes the GTP-dependent binding of aminoacyl-tRNA to the A-site of ribosomes during protein biosynthesis. The polypeptide is Elongation factor Tu (Symbiobacterium thermophilum (strain DSM 24528 / JCM 14929 / IAM 14863 / T)).